The primary structure comprises 162 residues: NADH-quinone oxidoreductase subunit I 2 (162 aa).

2 4Fe-4S ferredoxin-type domains span residues 53–83 (LRRYPNGEERCIACKLCEAVCPALAITIDSE) and 93–122 (TRYDIDLFKCIYCGFCEESCPVDSIVETRI). Residues Cys-63, Cys-66, Cys-69, Cys-73, Cys-102, Cys-105, Cys-108, and Cys-112 each coordinate [4Fe-4S] cluster.

It belongs to the complex I 23 kDa subunit family. NDH-1 is composed of 14 different subunits. Subunits NuoA, H, J, K, L, M, N constitute the membrane sector of the complex. [4Fe-4S] cluster is required as a cofactor.

It localises to the cell inner membrane. The enzyme catalyses a quinone + NADH + 5 H(+)(in) = a quinol + NAD(+) + 4 H(+)(out). Its function is as follows. NDH-1 shuttles electrons from NADH, via FMN and iron-sulfur (Fe-S) centers, to quinones in the respiratory chain. The immediate electron acceptor for the enzyme in this species is believed to be ubiquinone. Couples the redox reaction to proton translocation (for every two electrons transferred, four hydrogen ions are translocated across the cytoplasmic membrane), and thus conserves the redox energy in a proton gradient. This is NADH-quinone oxidoreductase subunit I 2 from Nitrosococcus oceani (strain ATCC 19707 / BCRC 17464 / JCM 30415 / NCIMB 11848 / C-107).